A 316-amino-acid polypeptide reads, in one-letter code: Glucan endo-1,3-beta-glucosidase GV (316 aa).

Glu99 functions as the Proton donor in the catalytic mechanism. Glu239 acts as the Nucleophile in catalysis.

The protein belongs to the glycosyl hydrolase 17 family.

It is found in the cytoplasm. It catalyses the reaction Hydrolysis of (1-&gt;3)-beta-D-glucosidic linkages in (1-&gt;3)-beta-D-glucans.. May provide a degree of protection against microbial invasion of germinated barley grain through its ability to degrade fungal cell wall polysaccharides. This chain is Glucan endo-1,3-beta-glucosidase GV, found in Hordeum vulgare (Barley).